A 123-amino-acid polypeptide reads, in one-letter code: Protein Wnt-7b (123 aa).

S1 carries the O-palmitoleoyl serine; by PORCN lipid modification. Residues 33-61 (VEVVRASRLRQPTFLKIKQIKSYQKPMET) form a disordered linker region. C89 and C104 are disulfide-bonded. An N-linked (GlcNAc...) asparagine glycan is attached at N90.

The protein belongs to the Wnt family. Post-translationally, palmitoleoylation is required for efficient binding to frizzled receptors. Depalmitoleoylation leads to Wnt signaling pathway inhibition.

The protein resides in the secreted. The protein localises to the extracellular space. It is found in the extracellular matrix. Ligand for members of the frizzled family of seven transmembrane receptors that functions in the canonical Wnt/beta-catenin signaling pathway. Required for normal fusion of the chorion and the allantois during placenta development. Required for central nervous system (CNS) angiogenesis and blood-brain barrier regulation. The polypeptide is Protein Wnt-7b (WNT7B) (Anser caerulescens (Snow goose)).